The chain runs to 485 residues: Glutamyl-tRNA(Gln) amidotransferase subunit A (485 aa).

Active-site charge relay system residues include K78 and S153. The Acyl-ester intermediate role is filled by S177.

It belongs to the amidase family. GatA subfamily. As to quaternary structure, heterotrimer of A, B and C subunits.

It carries out the reaction L-glutamyl-tRNA(Gln) + L-glutamine + ATP + H2O = L-glutaminyl-tRNA(Gln) + L-glutamate + ADP + phosphate + H(+). Functionally, allows the formation of correctly charged Gln-tRNA(Gln) through the transamidation of misacylated Glu-tRNA(Gln) in organisms which lack glutaminyl-tRNA synthetase. The reaction takes place in the presence of glutamine and ATP through an activated gamma-phospho-Glu-tRNA(Gln). This is Glutamyl-tRNA(Gln) amidotransferase subunit A from Bacillus cereus (strain ATCC 10987 / NRS 248).